The following is a 286-amino-acid chain: Serine carboxypeptidase-like (286 aa).

Ser4 is a catalytic residue. 2 disulfides stabilise this stretch: Cys83–Cys98 and Cys121–Cys126. Residue Asp193 is part of the active site. Residue Cys196 coordinates substrate. Asn227 is a glycosylation site (N-linked (GlcNAc...) asparagine). The active site involves His250.

This sequence belongs to the peptidase S10 family.

Its function is as follows. Involved in degradation of small peptides. The sequence is that of Serine carboxypeptidase-like from Pisum sativum (Garden pea).